Reading from the N-terminus, the 1294-residue chain is Ethylene-insensitive protein 2 (1294 aa).

The Cytoplasmic portion of the chain corresponds to 1–12; that stretch reads MEAEIVNVRPQL. Residues 13 to 33 traverse the membrane as a helical segment; that stretch reads GFIQRMVPALLPVLLVSVGYI. Topologically, residues 34 to 50 are extracellular; sequence DPGKWVANIEGGARFGY. Residues 51 to 71 traverse the membrane as a helical segment; that stretch reads DLVAITLLFNFAAILCQYVAA. The Cytoplasmic portion of the chain corresponds to 72–105; sequence RISVVTGKHLAQICNEEYDKWTCMFLGIQAEFSA. The chain crosses the membrane as a helical span at residues 106–126; sequence ILLDLTMVVGVAHALNLLFGV. E127 is a topological domain (extracellular). Residues 128 to 148 form a helical membrane-spanning segment; it reads LSTGVFLAAMDAFLFPVFASF. Over 149-155 the chain is Cytoplasmic; it reads LENGMAN. Residues 156–176 form a helical membrane-spanning segment; that stretch reads TVSIYSAGLVLLLYVSGVLLS. At 177–194 the chain is on the extracellular side; that stretch reads QSEIPLSMNGVLTRLNGE. The helical transmembrane segment at 195–215 threads the bilayer; that stretch reads SAFALMGLLGASIVPHNFYIH. At 216 to 237 the chain is on the cytoplasmic side; the sequence is SYFAGESTSSSDVDKSSLCQDH. The chain crosses the membrane as a helical span at residues 238 to 258; that stretch reads LFAIFGVFSGLSLVNYVLMNA. Residues 259-287 lie on the Extracellular side of the membrane; it reads AANVFHSTGLVVLTFHDALSLMEQVFMSP. The helical transmembrane segment at 288–308 threads the bilayer; sequence LIPVVFLMLLFFSSQITALAW. The Cytoplasmic portion of the chain corresponds to 309-334; that stretch reads AFGGEVVLHDFLKIEIPAWLHRATIR. The next 2 membrane-spanning stretches (helical) occupy residues 335–355 and 356–376; these read ILAV…GIYQ and LLIF…IPLF. Topologically, residues 377–397 are cytoplasmic; it reads RIASSRQIMGVHKIPQVGEFL. Residues 398–418 traverse the membrane as a helical segment; that stretch reads ALTTFLGFLGLNVVFVVEMVF. The Extracellular segment spans residues 419–440; it reads GSSDWAGGLRWNTVMGTSIQYT. A helical membrane pass occupies residues 441 to 461; that stretch reads TLLVSSCASLCLILWLAATPL. At 462–1294 the chain is on the cytoplasmic side; the sequence is KSASNRAEAQ…KNVTAYGSLG (833 aa). 2 disordered regions span residues 534 to 561 and 623 to 662; these read TDQE…SSLK and ETEE…SLSR. Basic and acidic residues predominate over residues 536–550; sequence QEIRSSPPEERELDV. 3 positions are modified to phosphoserine: S645, S659, and S757. T819 carries the phosphothreonine modification. A Phosphoserine modification is found at S924. Residues 1262–1269 carry the Nuclear localization signal motif; the sequence is LKRYKRRL. Residues 1269-1294 are disordered; the sequence is LSNKPVGMNQDGPGSRKNVTAYGSLG. S1283 bears the Phosphoserine mark.

Belongs to the NRAMP (TC 2.A.55) family. In terms of assembly, interacts (via NLS) with ETR1. Interacts (via C-terminus) with EER5 and the COP9 signalosome subunits CSN3, CSN6A and CSN6B. Interacts with ETP1 and ETP2. Interacts with CTR1. Interacts with all members of the ethylene receptor family, including ETR1, ETR2, ERS1, ERS2 and EIN4. Binds to MRF3/ECIP1. Interacts with several P-body components, such as XRN4/EIN5, PAB2, PAB4 and PAB8. Binds to ENAP1 in the presence of ethylene; this reaction facilitates its association with histone. Post-translationally, phosphorylated by CTR1 on at least 4 sites. Phosphorylation of Ser-645 and Ser-924 is involved in repressing EIN2 signaling. Loss of phosphorylation results in nuclear localization of the C-terminus of EIN2. In terms of tissue distribution, localized to the guard cells after methyl jasmonate treatment.

The protein resides in the endoplasmic reticulum membrane. Its subcellular location is the nucleus. The protein localises to the cytoplasm. In terms of biological role, central factor in signaling pathways regulated by ethylene (ET) and involved in various processes including development, plant defense, senescence, nucleotide sugar flux, and tropisms. Necessary for ethylene-mediated gene regulation, and for the induction of some genes by ozone. Acts downstream of ET receptors, and upstream of ethylene regulated transcription factors. Required for cytokinin-mediated processes. Seems to be implicated in cross-talk between ET, jasmonate and other pathways. Probably not involved in iron uptake. Has a short half-life and undergoes rapid proteasome-mediated turnover in the absence of ethylene. Required for ethylene-induced EIN3 stabilization via proteasomal degradation of EBF1/EBF2 proteins. Regulates the leaf senescence induced by methyl jasmonate, ethylene and abscisic acid. Required during salt stress to confer resistance. Its function is as follows. Trafficking signal inducing ethylene response. The nuclear localization is both necessary and sufficient to activate EIN3-mediated transcription and ethylene responses. Involved in ethylene (ET)-mediated signaling pathways by triggering histone acetylation of H3K14 and H3K23 in an ENAP1-dependent manner, thus influencing the expression of ethylene-responsive genes. Necessary and sufficient for 3'-UTR-mediated translational repression of EBF1 and EBF2 mRNAs. Ethylene induces EIN2-CEND to associate with 3' UTRs in cytoplasmic foci and target EBF1/2 mRNAs to cytoplasmic processing-body (P-body). MPK6 regulates the cleavage and nuclear translocation of EIN2-CEND under methyl jasmonate treatment. Required for EIN3 accumulation. This is Ethylene-insensitive protein 2 from Arabidopsis thaliana (Mouse-ear cress).